Consider the following 388-residue polypeptide: Cystathionine gamma-synthase (388 aa).

Position 208 is an N6-(pyridoxal phosphate)lysine (Lys208).

It belongs to the trans-sulfuration enzymes family. Homotetramer. Pyridoxal 5'-phosphate is required as a cofactor.

The protein localises to the cytoplasm. The catalysed reaction is O-succinyl-L-homoserine + L-cysteine = L,L-cystathionine + succinate + H(+). Functionally, catalyzes the formation of L-cystathionine from O-succinyl-L-homoserine (OSHS) and L-cysteine, via a gamma-replacement reaction. In the absence of thiol, catalyzes gamma-elimination to form 2-oxobutanoate, succinate and ammonia. In Mycobacterium leprae (strain TN), this protein is Cystathionine gamma-synthase (metB).